Here is a 390-residue protein sequence, read N- to C-terminus: Purine permease 21 (390 aa).

Residues 12–34 (QQGKEPIPTDQDERSSVSGSQTK) form a disordered region. 10 helical membrane passes run 44-64 (WLRV…ATIL), 78-98 (LATV…LLSV), 118-138 (LVYI…SIGL), 140-160 (YLPV…TAFF), 169-189 (LTPI…LLAF), 204-224 (YVKG…LLSL), 241-261 (VINM…VGLF), 287-307 (LVWT…LIFE), 312-332 (FSNA…VIIF), and 336-356 (MNGL…SYVY). The segment at 367–390 (KSNEIPTTESPDRPEAEGSSEQSK) is disordered.

The protein belongs to the purine permeases (TC 2.A.7.14) family. As to expression, expressed in mesophyll cells.

Its subcellular location is the membrane. This chain is Purine permease 21, found in Arabidopsis thaliana (Mouse-ear cress).